Here is a 209-residue protein sequence, read N- to C-terminus: Auxin-binding protein ABP19a (209 aa).

The N-terminal stretch at 1 to 18 (MIFPIFFTFFLLLSSSHA) is a signal peptide. C24 and C39 are oxidised to a cystine. The Cupin type-1 domain maps to 53-199 (SGLGIAGNTT…TTFLDAAQIK (147 aa)). Residue N60 is glycosylated (N-linked (GlcNAc...) asparagine). Mn(2+) contacts are provided by H101, H103, E108, and H147.

It belongs to the germin family. In terms of assembly, interacts with ABP20.

It localises to the secreted. The protein resides in the extracellular space. Its subcellular location is the apoplast. It is found in the cell wall. Its function is as follows. Probable receptor for the plant growth-promoting hormone auxin. This is Auxin-binding protein ABP19a (ABP19A) from Prunus persica (Peach).